The chain runs to 177 residues: Large ribosomal subunit protein uL6 (177 aa).

This sequence belongs to the universal ribosomal protein uL6 family. Part of the 50S ribosomal subunit.

Its function is as follows. This protein binds to the 23S rRNA, and is important in its secondary structure. It is located near the subunit interface in the base of the L7/L12 stalk, and near the tRNA binding site of the peptidyltransferase center. The polypeptide is Large ribosomal subunit protein uL6 (Rickettsia rickettsii (strain Iowa)).